The following is a 296-amino-acid chain: Nitrogenase iron protein (296 aa).

10 to 17 (GKGGIGKS) contacts ATP. Position 98 (cysteine 98) interacts with [4Fe-4S] cluster. Arginine 101 is subject to ADP-ribosylarginine; by dinitrogenase reductase ADP-ribosyltransferase. Cysteine 133 lines the [4Fe-4S] cluster pocket.

It belongs to the NifH/BchL/ChlL family. As to quaternary structure, homodimer. Requires [4Fe-4S] cluster as cofactor. In terms of processing, the reversible ADP-ribosylation of Arg-101 inactivates the nitrogenase reductase and regulates nitrogenase activity.

The catalysed reaction is N2 + 8 reduced [2Fe-2S]-[ferredoxin] + 16 ATP + 16 H2O = H2 + 8 oxidized [2Fe-2S]-[ferredoxin] + 2 NH4(+) + 16 ADP + 16 phosphate + 6 H(+). Its function is as follows. The key enzymatic reactions in nitrogen fixation are catalyzed by the nitrogenase complex, which has 2 components: the iron protein and the molybdenum-iron protein. The chain is Nitrogenase iron protein from Magnetococcus marinus (strain ATCC BAA-1437 / JCM 17883 / MC-1).